The chain runs to 147 residues: Diuretic hormone 45 (147 aa).

An N-terminal signal peptide occupies residues Met1–Ser26. Residues Ile27 to Pro84 constitute a propeptide that is removed on maturation. Val131 is modified (valine amide). Positions Gly135–Asn147 are excised as a propeptide.

The protein belongs to the sauvagine/corticotropin-releasing factor/urotensin I family.

It is found in the secreted. Its function is as follows. Regulation of fluid secretion. The protein is Diuretic hormone 45 (dh45) of Bombyx mori (Silk moth).